Here is a 372-residue protein sequence, read N- to C-terminus: Envelope phospholipase OPG057 (372 aa).

The short motif at 153–156 (YPPL) is the YPPL element. 2 S-palmitoyl cysteine; by host lipidation sites follow: Cys-185 and Cys-186. The region spanning 307-334 (FTIQNNTKLLIVDDEYVHITSANFDGTH) is the PLD phosphodiesterase domain.

Belongs to the orthopoxvirus OPG057 family. In terms of assembly, interacts with protein OPG190/B5. Post-translationally, palmitoylated. Attachment of the palmitate moiety is essential for correct intracellular targeting and protein function.

It localises to the virion membrane. The protein localises to the host Golgi apparatus. Its subcellular location is the host trans-Golgi network. It is found in the host endoplasmic reticulum membrane. It carries out the reaction a 1,2-diacyl-sn-glycero-3-phosphocholine + H2O = a 1,2-diacyl-sn-glycero-3-phosphate + choline + H(+). In terms of biological role, major envelope protein that plays a role in the biogenesis of the viral double membrane and in egress of virus from the host cell. Produces the wrapped form of virus that is required for cell-to-cell spread. Acts as a lipase with broad specificity including phospholipase C, phospholipase A, and triacylglycerol lipase activities. The protein is Envelope phospholipase OPG057 (OPG057) of Vaccinia virus (strain Western Reserve) (VACV).